Reading from the N-terminus, the 514-residue chain is Cytochrome P450 71AP13 (514 aa).

The helical transmembrane segment at 20–37 (HSSLFAFSLLILLLKFIY) threads the bilayer. Asparagine 127 and asparagine 184 each carry an N-linked (GlcNAc...) asparagine glycan. Heme is bound at residue cysteine 455.

This sequence belongs to the cytochrome P450 family. It depends on heme as a cofactor. As to expression, expressed in fruit kernel, seedlings, leaves and stems.

The protein localises to the membrane. The sequence is that of Cytochrome P450 71AP13 from Prunus mume (Japanese apricot).